We begin with the raw amino-acid sequence, 473 residues long: N-lysine methyltransferase SETD6 (473 aa).

Lys39 is modified (N6-methylated lysine; by autocatalysis). One can recognise an SET domain in the interval 60-286 (PPAQVAVSRQ…KGHEIFNTYG (227 aa)). 73-75 (AGY) lines the S-adenosyl-L-methionine pocket. Substrate is bound at residue Trp122. Lys179 carries the post-translational modification N6-methylated lysine; by autocatalysis. Tyr223 lines the S-adenosyl-L-methionine pocket. Substrate-binding residues include Ser224 and Gln226. 251 to 252 (NH) is an S-adenosyl-L-methionine binding site. Substrate-binding residues include Tyr262 and Tyr297. Residue Tyr297 coordinates S-adenosyl-L-methionine. At Lys372 the chain carries N6-methylated lysine; by autocatalysis.

It belongs to the class V-like SAM-binding methyltransferase superfamily. Histone-lysine methyltransferase family. SETD6 subfamily. Monomer, homodimer and homotrimer; these structures are stabilized in the presence of S-adenosyl-L-methionine (SAM). In terms of processing, automethylated; Lys-39 and Lys-179 serve as the major automethylation sites.

The protein localises to the nucleus. The catalysed reaction is L-lysyl-[protein] + S-adenosyl-L-methionine = N(6)-methyl-L-lysyl-[protein] + S-adenosyl-L-homocysteine + H(+). It catalyses the reaction L-lysyl(8)-[histone H2AZ] + S-adenosyl-L-methionine = N(6)-methyl-L-lysyl(8)-[histone H2AZ] + S-adenosyl-L-homocysteine + H(+). Its activity is regulated as follows. Activated by automethylation. In terms of biological role, protein-lysine N-methyltransferase. Monomethylates 'Lys-310' of the RELA subunit of NF-kappa-B complex, leading to down-regulation of NF-kappa-B transcription factor activity. Monomethylates 'Lys-8' of H2AZ (H2AZK8me1). Required for the maintenance of embryonic stem cell self-renewal. Methylates PAK4. This Homo sapiens (Human) protein is N-lysine methyltransferase SETD6.